A 178-amino-acid chain; its full sequence is S-alkylcysteine N-acetyltransferase (178 aa).

An N-acetyltransferase domain is found at 4 to 163 (DIFRLATVED…IGVMMHKVLI (160 aa)).

The protein belongs to the acetyltransferase family.

It catalyses the reaction an S-substituted L-cysteine + acetyl-CoA = an N-acetyl-L-cysteine-S-conjugate + CoA + H(+). The catalysed reaction is S-benzyl-L-cysteine + acetyl-CoA = N-acetyl-S-benzyl-L-cysteine + CoA + H(+). The enzyme catalyses S-methyl-L-cysteine + acetyl-CoA = N-acetyl-S-methyl-L-cysteine + CoA + H(+). It participates in amino-acid metabolism. In terms of biological role, involved in a cysteine salvage pathway from S-alkylcysteine. Catalyzes the first step in this pathway, i.e. the amine acetylation of an S-alkylcysteine with a preference for S-benzyl-L-cysteine over S-methyl-L-cysteine. This pathway is likely important in the catabolism of alkylated cysteine generated by proteolysis of alkylated glutathione formed in the detoxification of a wide range of electrophiles. This is S-alkylcysteine N-acetyltransferase from Bacillus subtilis (strain 168).